The following is a 502-amino-acid chain: MFGDRQRPMVLVLGLGESGLAIARWCARHGCRLRIADTREAPPNLAALQAEGIDAEFVGGPFTPALLDGGVEIVGLSPGLSPLEPALAALIAAANERAIAVWGELEFFAQALRALGTSGYQPKVLAITGTNGKTTTTNLTGLLCQRSGKKVAVAGNISPAMLDRLARAIDETALPDVWVLELSSFQLETARTFAPDAAAILNITQDHLDWHGSFDAYAAAKGRIFGATTTRVLNRDDAAVMKFAPAAGAADAARTVTFGLNEPAQQGDYGLSRDNGIAWLVEAVDRDAPDETTSRRRKRDGAHTPDIAQKRLMPADALRIRGLHNAANALAAFALARAIDLPAAPLLHALREYRGEAHRVEVIATIDDVDYVDDSKGTNVGATVAALDGLAQKIVLIAGGDGKGQDFAPLVAPVARWCRAVMLIGRDAPAIRDTLAETGVPLADHATLEAAVHAAAELAEPGDAVLLSPACASLDMFRNYAHRADVFRAAVDEIAIDKGATT.

Residue 129–135 (GTNGKTT) participates in ATP binding. The disordered stretch occupies residues 288 to 307 (APDETTSRRRKRDGAHTPDI).

The protein belongs to the MurCDEF family.

The protein resides in the cytoplasm. It catalyses the reaction UDP-N-acetyl-alpha-D-muramoyl-L-alanine + D-glutamate + ATP = UDP-N-acetyl-alpha-D-muramoyl-L-alanyl-D-glutamate + ADP + phosphate + H(+). It participates in cell wall biogenesis; peptidoglycan biosynthesis. In terms of biological role, cell wall formation. Catalyzes the addition of glutamate to the nucleotide precursor UDP-N-acetylmuramoyl-L-alanine (UMA). The sequence is that of UDP-N-acetylmuramoylalanine--D-glutamate ligase from Burkholderia ambifaria (strain ATCC BAA-244 / DSM 16087 / CCUG 44356 / LMG 19182 / AMMD) (Burkholderia cepacia (strain AMMD)).